The following is a 570-amino-acid chain: Keratin, type I cytoskeletal 10 (570 aa).

Low complexity predominate over residues methionine 1–arginine 16. Residues methionine 1–serine 29 are disordered. Residues methionine 1–asparagine 143 form a head region. 2 positions are modified to phosphoserine: serine 15 and serine 17. The residue at position 32 (arginine 32) is an Asymmetric dimethylarginine; alternate. Arginine 32 is subject to Omega-N-methylarginine; alternate. Residues serine 34, serine 45, serine 48, and serine 168 each carry the phosphoserine modification. The interval glycine 144 to tryptophan 179 is coil 1A. An IF rod domain is found at glycine 144–serine 458. Residues tyrosine 180–threonine 200 are linker 1. Positions isoleucine 201–leucine 292 are coil 1B. The linker 12 stretch occupies residues glutamine 293–leucine 315. The segment at leucine 316 to glutamate 454 is coil 2. The segment at leucine 451–tyrosine 570 is disordered. The tract at residues glycine 455–tyrosine 570 is tail. Over residues serine 456–aspartate 562 the composition is skewed to gly residues.

It belongs to the intermediate filament family. As to quaternary structure, (Microbial infection) Interacts (via C-terminal tail domain) with the S.aureus clumping factor, clfB; this interaction probably mediates S.aureus attachment to the highly keratinized squamous epithelial cells from the nasal cavity. In terms of assembly, heterotetramer of two type I and two type II keratins. Heterodimer with KRT1. Two heterodimers of KRT1 and KRT10 form a heterotetramer. The KRT10 subunit in the heterotetramer is probably disulfide-linked. Interacts with PLEC isoform 1C, when in a heterodimer with KRT1. (Microbial infection) Interacts (via the C-terminal tail domain) with S.pneumoniae serine-rich repeat protein PsrP; this interaction probably mediates S.pneumoniae adherence to lung tissue and subsequent pathogenesis. In terms of tissue distribution, expressed in the suprabasal layers of the epidermis throughout the entire sole (at protein level). Expressed in the infundibular regions of the ear, the interscale regions of the tail, and the interfollicular epidermis of the back. Expressed in lung tissue from young mice (at protein level).

It is found in the secreted. The protein resides in the extracellular space. Its subcellular location is the cell surface. The protein localises to the cytoplasm. Plays a role in the establishment of the epidermal barrier on plantar skin. Involved in the maintenance of cell layer development and keratin filament bundles in suprabasal cells of the epithelium. Its function is as follows. (Microbial infection) Acts as a mediator of S.aureus adherence to desquamated nasal epithelial cells via clfB, and hence may play a role in nasal colonization. Functionally, (Microbial infection) Binds S.pneumoniae PsrP, mediating adherence of the bacteria to lung cell lines. This chain is Keratin, type I cytoskeletal 10 (Krt10), found in Mus musculus (Mouse).